The primary structure comprises 213 residues: MKPYQRQFIEFALNKQVLKFGEFTLKSGRKSPYFFNAGLFNTGRDLALLGRFYAEALVDSGIEFDLLFGPAYKGIPIATTTAVALAEHHDKDLPYCFNRKEAKDHGEGGSLVGSALQGRVMLVDDVITAGTAIRESMEIIQAHGATLAGVLISLDRQERGRGEISAIQEVERDYGCKVISIITLKDLIAYLEEKPDMAEHLAAVRAYREEFGV.

Position 26 (lysine 26) interacts with 5-phospho-alpha-D-ribose 1-diphosphate. 34–35 lines the orotate pocket; it reads FF. 5-phospho-alpha-D-ribose 1-diphosphate contacts are provided by residues 72–73, arginine 99, lysine 100, lysine 103, histidine 105, and 124–132; these read YK and DDVITAGTA. Residues threonine 128 and arginine 156 each contribute to the orotate site.

It belongs to the purine/pyrimidine phosphoribosyltransferase family. PyrE subfamily. In terms of assembly, homodimer. The cofactor is Mg(2+).

It carries out the reaction orotidine 5'-phosphate + diphosphate = orotate + 5-phospho-alpha-D-ribose 1-diphosphate. It functions in the pathway pyrimidine metabolism; UMP biosynthesis via de novo pathway; UMP from orotate: step 1/2. In terms of biological role, catalyzes the transfer of a ribosyl phosphate group from 5-phosphoribose 1-diphosphate to orotate, leading to the formation of orotidine monophosphate (OMP). The sequence is that of Orotate phosphoribosyltransferase from Salmonella choleraesuis (strain SC-B67).